A 343-amino-acid chain; its full sequence is Uroporphyrinogen decarboxylase (343 aa).

Substrate contacts are provided by residues 23 to 27 (RQAGR), Asp73, Tyr151, Ser206, and His319.

Belongs to the uroporphyrinogen decarboxylase family. As to quaternary structure, homodimer.

It is found in the cytoplasm. The enzyme catalyses uroporphyrinogen III + 4 H(+) = coproporphyrinogen III + 4 CO2. It participates in porphyrin-containing compound metabolism; protoporphyrin-IX biosynthesis; coproporphyrinogen-III from 5-aminolevulinate: step 4/4. Its function is as follows. Catalyzes the decarboxylation of four acetate groups of uroporphyrinogen-III to yield coproporphyrinogen-III. This Sulfurimonas denitrificans (strain ATCC 33889 / DSM 1251) (Thiomicrospira denitrificans (strain ATCC 33889 / DSM 1251)) protein is Uroporphyrinogen decarboxylase.